We begin with the raw amino-acid sequence, 156 residues long: Small ribosomal subunit protein uS7 (156 aa).

It belongs to the universal ribosomal protein uS7 family. In terms of assembly, part of the 30S ribosomal subunit. Contacts proteins S9 and S11.

Functionally, one of the primary rRNA binding proteins, it binds directly to 16S rRNA where it nucleates assembly of the head domain of the 30S subunit. Is located at the subunit interface close to the decoding center, probably blocks exit of the E-site tRNA. In Cronobacter sakazakii (strain ATCC BAA-894) (Enterobacter sakazakii), this protein is Small ribosomal subunit protein uS7.